Consider the following 437-residue polypeptide: Regulator of phospholipase D SRF1 (437 aa).

Residues 1-24 (MGDSNSSQEAYSDTTSTNASRIAD) form a disordered region. Residues 1–267 (MGDSNSSQEA…LTSLLLDNQY (267 aa)) are Cytoplasmic-facing. Phosphoserine is present on residues serine 45 and serine 167. The chain crosses the membrane as a helical span at residues 268–288 (LILGLRIFTGILSCISLALAI). The Extracellular segment spans residues 289 to 308 (KIFQNSRSNNTISESKIGQQ). A glycan (N-linked (GlcNAc...) asparagine) is linked at asparagine 297. A helical membrane pass occupies residues 309–329 (PSTIMAICVNAVAIAYIIYIA). Residues 330–348 (HDEFAGKPVGLRNPLSKLK) lie on the Cytoplasmic side of the membrane. Residues 349–369 (LILLDLLFIIFSSANLALAFN) form a helical membrane-spanning segment. Residues 370–403 (TRFDKEWVCTSIRRSNGSTYGYPKIPRICRKQEA) lie on the Extracellular side of the membrane. N-linked (GlcNAc...) asparagine glycosylation is present at asparagine 385. Residues 404 to 424 (LSAFLFVALFMWVITFSISIV) form a helical membrane-spanning segment. The Cytoplasmic segment spans residues 425 to 437 (RVVEKVSSITNRN).

In terms of assembly, interacts with SPO14.

It localises to the membrane. Functionally, regulator of phospholipase D (SPO14) which is required for SPO14 catalytic activity in mitotic cells. Essential to buffer the toxic effects of C16:0 platelet activating factor. The protein is Regulator of phospholipase D SRF1 (SRF1) of Saccharomyces cerevisiae (strain ATCC 204508 / S288c) (Baker's yeast).